A 109-amino-acid chain; its full sequence is U26-theraphotoxin-Cg1b (109 aa).

Residues 1–18 (MNTIIPLLLLSLLITVYA) form the signal peptide. A propeptide spanning residues 19–67 (YALEDGNKEEMQDIAESEFEASNEMLQLAHLLEADRAETEEDRNSRQKR) is cleaved from the precursor. 3 disulfide bridges follow: Cys-68/Cys-83, Cys-75/Cys-88, and Cys-82/Cys-103.

Belongs to the neurotoxin 14 (magi-1) family. 07 (Jztx-56) subfamily. In terms of tissue distribution, expressed by the venom gland.

The protein localises to the secreted. Its function is as follows. Probable ion channel inhibitor. This is U26-theraphotoxin-Cg1b from Chilobrachys guangxiensis (Chinese earth tiger tarantula).